The chain runs to 666 residues: N-acetylgalactosaminyltransferase 6 (666 aa).

Topologically, residues 1–11 (MRRPNLKWIVK) are cytoplasmic. The helical; Signal-anchor for type II membrane protein transmembrane segment at 12–31 (ASLLLLISLTLFVLITSWIS) threads the bilayer. Residues 32 to 666 (STPYTNKPVH…NYSQDLVLSL (635 aa)) are Lumenal-facing. The disordered stretch occupies residues 90-126 (EPVEEEVDNPHPADDEPQQQPQEELQMAAPADASVKK). A compositionally biased stretch (low complexity) spans 107–120 (QQQPQEELQMAAPA). N-linked (GlcNAc...) asparagine glycosylation occurs at asparagine 181. 5 disulfide bridges follow: cysteine 192–cysteine 421, cysteine 412–cysteine 491, cysteine 531–cysteine 548, cysteine 577–cysteine 594, and cysteine 621–cysteine 636. The segment at 201–311 (LPTVSVIIIF…YNWLPPLLEP (111 aa)) is catalytic subdomain A. The substrate site is built by aspartate 242 and arginine 272. Asparagine 285 is a glycosylation site (N-linked (GlcNAc...) asparagine). Mn(2+) is bound at residue aspartate 295. Serine 296 contacts substrate. Residue histidine 297 coordinates Mn(2+). Residues 367–429 (PFKSPIMAGG…PCSRIGHIYR (63 aa)) form a catalytic subdomain B region. Tryptophan 398 contributes to the substrate binding site. Histidine 426 is a Mn(2+) binding site. Arginine 429 lines the substrate pocket. The Ricin B-type lectin domain maps to 518 to 648 (AMGALQNVGN…DNRFQQWNFG (131 aa)). 2 N-linked (GlcNAc...) asparagine glycosylation sites follow: asparagine 651 and asparagine 657.

It belongs to the glycosyltransferase 2 family. GalNAc-T subfamily. It depends on Mn(2+) as a cofactor. As to expression, expressed during oogenesis, in the somatically derived follicle cells that surround the developing oocyte, which are involved in the maturation of the oocyte and construction of the egg shell, as well as playing a role in subsequent embryonic pattern formation. Expressed in the salivary glands from embryonic stage 12 onwards, becoming stronger at stage 13. During embryonic stages 12-13, also expressed in the posterior midgut and hindgut. During embryonic stages 14-15, expression continues in the hindgut. Expression is detected in the epidermis and antennomaxillary complex during embryonic stages 16-17. In third instar larvae, ubiquitously expressed in wing, eye-antennal, leg and haltere imaginal disks.

The protein localises to the golgi apparatus membrane. The catalysed reaction is L-seryl-[protein] + UDP-N-acetyl-alpha-D-galactosamine = a 3-O-[N-acetyl-alpha-D-galactosaminyl]-L-seryl-[protein] + UDP + H(+). It carries out the reaction L-threonyl-[protein] + UDP-N-acetyl-alpha-D-galactosamine = a 3-O-[N-acetyl-alpha-D-galactosaminyl]-L-threonyl-[protein] + UDP + H(+). Its pathway is protein modification; protein glycosylation. Functionally, glycopeptide transferase involved in O-linked oligosaccharide biosynthesis, which catalyzes the transfer of an N-acetyl-D-galactosamine residue to an already glycosylated peptide. In contrast to other proteins of the family, it does not act as a peptide transferase that transfers GalNAc onto serine or threonine residue on the protein receptor, but instead requires the prior addition of a GalNAc on a peptide before adding additional GalNAc moieties. Some peptide transferase activity is however not excluded, considering that its appropriate peptide substrate may remain unidentified. Prefers the diglycosylated Muc5AC-3/13 as substrate. Might have a role in protein O-glycosylation in the Golgi and thereby in establishing and/or maintaining a proper secretory apparatus structure. This chain is N-acetylgalactosaminyltransferase 6, found in Drosophila melanogaster (Fruit fly).